We begin with the raw amino-acid sequence, 417 residues long: MTVAEIRARNLSIPAPSQITRPALAGEKETMVLNMGPHHPSTHGVLRLVVELDGETVVDVAPDIGFLHTGIEKTMESKTYQKAVVLTDRTDYLAPLSNNLSYVLAVEKLLGCEVPERATVARVLLVELQRIASHLVWLGTHALDLAAMSVFLYGFREREQILDIFELVSGARMMTSYFRVGGLAYDLPAGFDAAVEAFLQIMPGRIDEYEALLTDNPLWIERTQGIGAIDSEAAIALGLTGPGLRATGVAWDLRKTMPYCGYETYSFAIPTATHGDIYDRYLVRMAEMRESVSICRQALQRLRDIGPGPYMTSDRKIAPPPKSEITQSMEALIHHFKLWTEGFKPPRGDALAAVESPRGELATYIVSDGSAKPYRVHFRAPSFVNLQSLPHMARGHLVADLVALIASLDPVLGEVDR.

It belongs to the complex I 49 kDa subunit family. In terms of assembly, NDH-1 is composed of 14 different subunits. Subunits NuoB, C, D, E, F, and G constitute the peripheral sector of the complex.

It localises to the cell membrane. The catalysed reaction is a quinone + NADH + 5 H(+)(in) = a quinol + NAD(+) + 4 H(+)(out). In terms of biological role, NDH-1 shuttles electrons from NADH, via FMN and iron-sulfur (Fe-S) centers, to quinones in the respiratory chain. The immediate electron acceptor for the enzyme in this species is believed to be ubiquinone. Couples the redox reaction to proton translocation (for every two electrons transferred, four hydrogen ions are translocated across the cytoplasmic membrane), and thus conserves the redox energy in a proton gradient. The polypeptide is NADH-quinone oxidoreductase subunit D 2 (Roseiflexus sp. (strain RS-1)).